A 157-amino-acid chain; its full sequence is Mediator of RNA polymerase II transcription subunit 22 (157 aa).

This sequence belongs to the Mediator complex subunit 22 family. In terms of assembly, component of the Mediator complex.

Its subcellular location is the nucleus. Component of the Mediator complex, a coactivator involved in the regulated transcription of nearly all RNA polymerase II-dependent genes. Mediator functions as a bridge to convey information from gene-specific regulatory proteins to the basal RNA polymerase II transcription machinery. Mediator is recruited to promoters by direct interactions with regulatory proteins and serves as a scaffold for the assembly of a functional preinitiation complex with RNA polymerase II and the general transcription factors. The protein is Mediator of RNA polymerase II transcription subunit 22 (mdt-22) of Caenorhabditis elegans.